A 151-amino-acid polypeptide reads, in one-letter code: Globin CTT-IIIA (151 aa).

In terms of domain architecture, Globin spans 8-147 (SMTDAQVAAV…MFHVIFNALD (140 aa)). Histidine 98 lines the heme b pocket.

The protein belongs to the globin family. In terms of assembly, monomer.

This Chironomus thummi thummi (Midge) protein is Globin CTT-IIIA.